A 193-amino-acid chain; its full sequence is PXMP2/4 family protein 2 (193 aa).

4 helical membrane-spanning segments follow: residues 56–78 (VATMSTVGIFYSGPMLHYWYRSL), 96–116 (IDQLLFAPVAIGGFMTVTNFI), 132–152 (LFYAVKINWLIWPAAQIINFS), and 160–180 (VLYSSIISIFWGMFLSHISFD).

The protein belongs to the peroxisomal membrane protein PXMP2/4 family.

It is found in the membrane. This Dictyostelium discoideum (Social amoeba) protein is PXMP2/4 family protein 2.